The sequence spans 216 residues: Peptide methionine sulfoxide reductase MsrA (216 aa).

C54 is a catalytic residue.

It belongs to the MsrA Met sulfoxide reductase family.

It catalyses the reaction L-methionyl-[protein] + [thioredoxin]-disulfide + H2O = L-methionyl-(S)-S-oxide-[protein] + [thioredoxin]-dithiol. The enzyme catalyses [thioredoxin]-disulfide + L-methionine + H2O = L-methionine (S)-S-oxide + [thioredoxin]-dithiol. In terms of biological role, has an important function as a repair enzyme for proteins that have been inactivated by oxidation. Catalyzes the reversible oxidation-reduction of methionine sulfoxide in proteins to methionine. The protein is Peptide methionine sulfoxide reductase MsrA of Xylella fastidiosa (strain M12).